Consider the following 468-residue polypeptide: Intramembrane protease 2 (468 aa).

The Lumenal segment spans residues 1-22 (MAEAATEIPPTASNVTVFTFEE). Residue Asn-14 is glycosylated (N-linked (GlcNAc...) asparagine). The chain crosses the membrane as a helical span at residues 23-43 (QATSSLALYGMSILCIIIGSI). Residues 44–70 (RSAQYIRTNIDKKRLIEGSITMREARK) are Cytoplasmic-facing. A helical membrane pass occupies residues 71 to 91 (FPISASLVLFGLYLFFKPAAE). The Lumenal segment spans residues 92–168 (RFLWVARVFQ…TNLPTIQKAE (77 aa)). N-linked (GlcNAc...) asparagine glycosylation is found at Asn-114 and Asn-123. A helical transmembrane segment spans residues 169–189 (CMQLLTFLICFEGVNAFASLL). Over 190-247 (KPFVTAFLKKMPLVPSFLRFNAPYLFSLKKGNKEMEEGDIEDAKKKETEYLFKIDFDR) the chain is Cytoplasmic. The chain crosses the membrane as a helical span at residues 248-265 (YDIIALLMCSPILISHLL). Over 266 to 267 (KR) the chain is Lumenal. Residues 268–284 (HWITNNIIGVSFSILGI) traverse the membrane as a helical segment. The Cytoplasmic segment spans residues 285 to 296 (ERLHLASFKAGS). Residues 297–317 (LLLVGLFFYDIFWVFGTDVMT) form a helical membrane-spanning segment. Asp-306 is a catalytic residue. Residues 318-343 (SVAKGIDAPILLQFPQDIYRNGIMEA) lie on the Lumenal side of the membrane. The chain crosses the membrane as a helical span at residues 344–364 (SKHSMLGLGDIVIPGIFIALL). Asp-353 is a catalytic residue. Residues 365–388 (RRFDYRVVQTTAESKAPQGSLKGR) are Cytoplasmic-facing. Residues 389 to 409 (YYFVVTVVAYMAGLFITMAVM) form a helical membrane-spanning segment. At 410–415 (HHFKAA) the chain is on the lumenal side. Residues 416-436 (QPALLYLVPCCLFVPLLLAVI) form a helical membrane-spanning segment. The PAL motif lies at 417 to 419 (PAL). Over 437–468 (RGELSALWNYDESRHVDNEENRKKVDSGKKNN) the chain is Cytoplasmic.

This sequence belongs to the peptidase A22B family.

Its subcellular location is the membrane. The protein resides in the endoplasmic reticulum membrane. Functionally, acts as intramembrane protease. In larvae, required for the complete shedding of the cuticle during molting, possibly by regulating cholesterol uptake via lrp-1. Involved in embryonic and larval development. The protein is Intramembrane protease 2 of Caenorhabditis elegans.